A 1194-amino-acid chain; its full sequence is Protein argonaute 3 (1194 aa).

Basic and acidic residues predominate over residues Met-1–Arg-98. Disordered regions lie at residues Met-1–Ser-277 and Thr-299–Gly-341. Low complexity predominate over residues Pro-142 to Asp-158. Basic and acidic residues predominate over residues Val-167–Val-180. The span at Gly-181–Asp-214 shows a compositional bias: gly residues. Over residues Val-215–Val-228 the composition is skewed to basic and acidic residues. Residues Gly-229–Asp-238 show a composition bias toward gly residues. Composition is skewed to low complexity over residues Gln-256 to Ser-277 and Thr-299 to Ser-316. Over residues Gly-317 to Ser-326 the composition is skewed to polar residues. The span at Ser-327–Gly-341 shows a compositional bias: basic and acidic residues. The PAZ domain occupies Ser-540–Glu-656. In terms of domain architecture, Piwi spans Leu-841–Glu-1145.

This sequence belongs to the argonaute family. Ago subfamily.

In terms of biological role, involved in RNA-mediated post-transcriptional gene silencing (PTGS). Main component of the RNA-induced silencing complex (RISC) that binds to a short guide RNA such as a microRNA (miRNA) or small interfering RNA (siRNA). RISC uses the mature miRNA or siRNA as a guide for slicer-directed cleavage of homologous mRNAs to repress gene expression. In Arabidopsis thaliana (Mouse-ear cress), this protein is Protein argonaute 3 (AGO3).